The primary structure comprises 66 residues: Large ribosomal subunit protein bL33c (66 aa).

It belongs to the bacterial ribosomal protein bL33 family.

The protein resides in the plastid. The protein localises to the chloroplast. The polypeptide is Large ribosomal subunit protein bL33c (Phalaenopsis aphrodite subsp. formosana (Moth orchid)).